The following is a 459-amino-acid chain: Bifunctional protein GlmU (459 aa).

The segment at 1-230 is pyrophosphorylase; it reads MSNRFAVILA…FDETLGVNDR (230 aa). UDP-N-acetyl-alpha-D-glucosamine is bound by residues 9 to 12, Lys-23, Gln-73, and 78 to 79; these read LAAG and GT. Position 103 (Asp-103) interacts with Mg(2+). Residues Gly-140, Glu-155, Asn-170, and Asn-228 each contribute to the UDP-N-acetyl-alpha-D-glucosamine site. Position 228 (Asn-228) interacts with Mg(2+). The segment at 231–251 is linker; the sequence is VALSQAEIIMKNRINRKNMVN. Positions 252–459 are N-acetyltransferase; sequence GVTIIDPSNT…VDQLLNKKKS (208 aa). The UDP-N-acetyl-alpha-D-glucosamine site is built by Arg-333 and Lys-351. His-363 (proton acceptor) is an active-site residue. 2 residues coordinate UDP-N-acetyl-alpha-D-glucosamine: Tyr-366 and Asn-377. Residues 386 to 387, Ala-423, and Arg-440 contribute to the acetyl-CoA site; that span reads NY.

This sequence in the N-terminal section; belongs to the N-acetylglucosamine-1-phosphate uridyltransferase family. In the C-terminal section; belongs to the transferase hexapeptide repeat family. Homotrimer. The cofactor is Mg(2+).

The protein resides in the cytoplasm. It catalyses the reaction alpha-D-glucosamine 1-phosphate + acetyl-CoA = N-acetyl-alpha-D-glucosamine 1-phosphate + CoA + H(+). The catalysed reaction is N-acetyl-alpha-D-glucosamine 1-phosphate + UTP + H(+) = UDP-N-acetyl-alpha-D-glucosamine + diphosphate. It functions in the pathway nucleotide-sugar biosynthesis; UDP-N-acetyl-alpha-D-glucosamine biosynthesis; N-acetyl-alpha-D-glucosamine 1-phosphate from alpha-D-glucosamine 6-phosphate (route II): step 2/2. The protein operates within nucleotide-sugar biosynthesis; UDP-N-acetyl-alpha-D-glucosamine biosynthesis; UDP-N-acetyl-alpha-D-glucosamine from N-acetyl-alpha-D-glucosamine 1-phosphate: step 1/1. Its pathway is bacterial outer membrane biogenesis; LPS lipid A biosynthesis. Catalyzes the last two sequential reactions in the de novo biosynthetic pathway for UDP-N-acetylglucosamine (UDP-GlcNAc). The C-terminal domain catalyzes the transfer of acetyl group from acetyl coenzyme A to glucosamine-1-phosphate (GlcN-1-P) to produce N-acetylglucosamine-1-phosphate (GlcNAc-1-P), which is converted into UDP-GlcNAc by the transfer of uridine 5-monophosphate (from uridine 5-triphosphate), a reaction catalyzed by the N-terminal domain. The protein is Bifunctional protein GlmU of Bacillus cereus (strain ZK / E33L).